The following is an 840-amino-acid chain: Protein translocase subunit SecA (840 aa).

Residues Gln85, 103–107, and Asp492 contribute to the ATP site; that span reads GEGKT. Residues 787-822 form a disordered region; that stretch reads QRERVAKETGASHGGDSQEVKKKPVKKEPKVGRNDL. A compositionally biased stretch (basic and acidic residues) spans 802-819; it reads DSQEVKKKPVKKEPKVGR. Residues Cys823, Cys825, Cys834, and Cys835 each contribute to the Zn(2+) site.

The protein belongs to the SecA family. Monomer and homodimer. Part of the essential Sec protein translocation apparatus which comprises SecA, SecYEG and auxiliary proteins SecDF. Other proteins may also be involved. It depends on Zn(2+) as a cofactor.

It localises to the cell membrane. It is found in the cytoplasm. The catalysed reaction is ATP + H2O + cellular proteinSide 1 = ADP + phosphate + cellular proteinSide 2.. Part of the Sec protein translocase complex. Interacts with the SecYEG preprotein conducting channel. Has a central role in coupling the hydrolysis of ATP to the transfer of proteins into and across the cell membrane, serving as an ATP-driven molecular motor driving the stepwise translocation of polypeptide chains across the membrane. The protein is Protein translocase subunit SecA of Clostridium perfringens (strain ATCC 13124 / DSM 756 / JCM 1290 / NCIMB 6125 / NCTC 8237 / Type A).